The following is a 457-amino-acid chain: NADP-specific glutamate dehydrogenase (457 aa).

Lys113 is an active-site residue.

This sequence belongs to the Glu/Leu/Phe/Val dehydrogenases family. As to quaternary structure, homohexamer.

The catalysed reaction is L-glutamate + NADP(+) + H2O = 2-oxoglutarate + NH4(+) + NADPH + H(+). The protein is NADP-specific glutamate dehydrogenase (GDH) of Tuber borchii (White truffle).